Consider the following 276-residue polypeptide: Extracellular metalloprotease VDBG_07883 (276 aa).

Residues Met-1–Ala-17 form the signal peptide. Asn-70 and Asn-102 each carry an N-linked (GlcNAc...) asparagine glycan. Residue His-191 participates in Zn(2+) binding. Glu-192 is a catalytic residue. His-195 is a binding site for Zn(2+). The N-linked (GlcNAc...) asparagine glycan is linked to Asn-222. Cys-227 and Cys-254 are oxidised to a cystine.

This sequence belongs to the peptidase M43B family.

The protein resides in the secreted. In terms of biological role, secreted metalloproteinase that allows assimilation of proteinaceous substrates. In Verticillium alfalfae (strain VaMs.102 / ATCC MYA-4576 / FGSC 10136) (Verticillium wilt of alfalfa), this protein is Extracellular metalloprotease VDBG_07883.